A 238-amino-acid polypeptide reads, in one-letter code: Leucine-rich repeat-containing protein 57 (238 aa).

8 LRR repeats span residues 39-60, 62-84, 85-106, 108-129, 131-152, 153-175, 176-196, and 201-221; these read NLRT…MGKF, LLKS…CKLK, KLET…FVQL, ALKT…LFKL, NLDV…VSGL, QAIE…SHCP, RLKV…PPSI, and QISL…RDLE.

The chain is Leucine-rich repeat-containing protein 57 (lrrc57) from Xenopus laevis (African clawed frog).